The following is a 449-amino-acid chain: mRNA-capping enzyme subunit alpha (449 aa).

The active-site N6-GMP-lysine intermediate is the K66. Residues 405–449 (DERKNGAYQHHSSSFSESRQQPKAEPVAEKKQTEPKYVDDDDWSD) form a disordered region. Polar residues predominate over residues 414 to 423 (HHSSSFSESR). Positions 424-442 (QQPKAEPVAEKKQTEPKYV) are enriched in basic and acidic residues.

This sequence belongs to the eukaryotic GTase family. In terms of assembly, heterodimer. The mRNA-capping enzyme is composed of two separate chains alpha and beta, respectively a mRNA guanylyltransferase and an mRNA 5'-triphosphate monophosphatase.

The protein localises to the nucleus. It carries out the reaction a 5'-end diphospho-ribonucleoside in mRNA + GTP + H(+) = a 5'-end (5'-triphosphoguanosine)-ribonucleoside in mRNA + diphosphate. Its function is as follows. Second step of mRNA capping. Transfer of the GMP moiety of GTP to the 5'-end of RNA via an enzyme-GMP covalent reaction intermediate. The chain is mRNA-capping enzyme subunit alpha (CEG1) from Candida glabrata (strain ATCC 2001 / BCRC 20586 / JCM 3761 / NBRC 0622 / NRRL Y-65 / CBS 138) (Yeast).